The sequence spans 199 residues: Tropomyosin-1 (199 aa).

Positions 1–199 form a coiled coil; the sequence is MDKIREKLSN…DEIAASLENL (199 aa). Residues lysine 39 and lysine 59 each participate in a glycyl lysine isopeptide (Lys-Gly) (interchain with G-Cter in ubiquitin) cross-link. Disordered stretches follow at residues 59–81 and 102–147; these read KLEAGLSDSKQTEQDNVEKENQI and LAES…TEKL. 2 stretches are compositionally biased toward basic and acidic residues: residues 68 to 80 and 102 to 114; these read KQTEQDNVEKENQ and LAESKQLSEDSHH. Residues 115–126 show a composition bias toward polar residues; that stretch reads LQSNNDNFSKKN. Basic and acidic residues predominate over residues 136 to 147; that stretch reads SDTKLKETTEKL. Residue lysine 187 forms a Glycyl lysine isopeptide (Lys-Gly) (interchain with G-Cter in ubiquitin) linkage. Serine 195 carries the phosphoserine modification.

In terms of assembly, homodimer.

The protein localises to the cytoplasm. Its subcellular location is the cytoskeleton. In Saccharomyces cerevisiae (strain ATCC 204508 / S288c) (Baker's yeast), this protein is Tropomyosin-1 (TPM1).